The following is a 247-amino-acid chain: 3-deoxy-manno-octulosonate cytidylyltransferase (247 aa).

The protein belongs to the KdsB family.

The protein resides in the cytoplasm. It carries out the reaction 3-deoxy-alpha-D-manno-oct-2-ulosonate + CTP = CMP-3-deoxy-beta-D-manno-octulosonate + diphosphate. It functions in the pathway nucleotide-sugar biosynthesis; CMP-3-deoxy-D-manno-octulosonate biosynthesis; CMP-3-deoxy-D-manno-octulosonate from 3-deoxy-D-manno-octulosonate and CTP: step 1/1. The protein operates within bacterial outer membrane biogenesis; lipopolysaccharide biosynthesis. Its function is as follows. Activates KDO (a required 8-carbon sugar) for incorporation into bacterial lipopolysaccharide in Gram-negative bacteria. This Chlorobium limicola (strain DSM 245 / NBRC 103803 / 6330) protein is 3-deoxy-manno-octulosonate cytidylyltransferase.